The primary structure comprises 346 residues: Very-long-chain 3-oxoacyl-CoA reductase (346 aa).

The chain crosses the membrane as a helical span at residues 26-46; it reads GASALLAAGSLFVVSRALVFV. Val71, Asp126, Asp134, Asn153, Tyr220, Lys224, Ile253, and Ser255 together coordinate NADP(+). Tyr220 functions as the Proton donor in the catalytic mechanism. Lys224 (lowers pKa of active site Tyr) is an active-site residue.

This sequence belongs to the short-chain dehydrogenases/reductases (SDR) family.

The protein localises to the endoplasmic reticulum membrane. It carries out the reaction a very-long-chain (3R)-3-hydroxyacyl-CoA + NADP(+) = a very-long-chain 3-oxoacyl-CoA + NADPH + H(+). The protein operates within lipid metabolism; fatty acid biosynthesis. Functionally, component of the microsomal membrane bound fatty acid elongation system, which produces the 26-carbon very long-chain fatty acids (VLCFA) from palmitate. Catalyzes the reduction of the 3-ketoacyl-CoA intermediate that is formed in each cycle of fatty acid elongation. VLCFAs serve as precursors for ceramide and sphingolipids. This chain is Very-long-chain 3-oxoacyl-CoA reductase, found in Aspergillus niger (strain ATCC MYA-4892 / CBS 513.88 / FGSC A1513).